A 709-amino-acid chain; its full sequence is Elongation factor G (709 aa).

Positions 10-295 (NQIRNIGIMA…AVVDYLPSPE (286 aa)) constitute a tr-type G domain. Residues 19–26 (AHIDAGKT), 91–95 (DTPGH), and 145–148 (NKMD) each bind GTP.

The protein belongs to the TRAFAC class translation factor GTPase superfamily. Classic translation factor GTPase family. EF-G/EF-2 subfamily.

It is found in the cytoplasm. In terms of biological role, catalyzes the GTP-dependent ribosomal translocation step during translation elongation. During this step, the ribosome changes from the pre-translocational (PRE) to the post-translocational (POST) state as the newly formed A-site-bound peptidyl-tRNA and P-site-bound deacylated tRNA move to the P and E sites, respectively. Catalyzes the coordinated movement of the two tRNA molecules, the mRNA and conformational changes in the ribosome. The chain is Elongation factor G from Bifidobacterium adolescentis (strain ATCC 15703 / DSM 20083 / NCTC 11814 / E194a).